Reading from the N-terminus, the 154-residue chain is MAKDKKDHKHSGSTEDEYDSYLPALMPIAKPLAPKKLNKKMMKTVKKASKQKHILRGVKEVVKAVRKGEKGLVILAGDISPMDVISHIPVLCEDNNVPYLYTVSKELLGEASNTKRPTSCVMIVPGGKKKDMSKVEEYKESYEEIIKEVPALEV.

Ser-119 carries the phosphoserine modification.

This sequence belongs to the eukaryotic ribosomal protein eL8 family. Component of the small nucleolar ribonucleoprotein particles containing H/ACA-type snoRNAs (H/ACA snoRNPs).

It is found in the nucleus. Its subcellular location is the nucleolus. Non-catalytic component of the H/ACA small nucleolar ribonucleoprotein (H/ACA snoRNP), which catalyzes pseudouridylation of rRNA and is required for ribosome biogenesis. This involves the isomerization of uridine such that the ribose is subsequently attached to C5, instead of the normal N1. Pseudouridine ('psi') residues may serve to stabilize the conformation of rRNAs. The H/ACA snoRNP complex also mediates pseudouridylation of other types of RNAs. The H/ACA snoRNP complex mediates pseudouridylation at position 93 in U2 snRNA. Directly binds H/ACA snoRNAs. The chain is H/ACA ribonucleoprotein complex subunit nhp2 (nhp2) from Schizosaccharomyces pombe (strain 972 / ATCC 24843) (Fission yeast).